A 186-amino-acid chain; its full sequence is Adenine phosphoribosyltransferase (186 aa).

Belongs to the purine/pyrimidine phosphoribosyltransferase family. As to quaternary structure, homodimer.

It localises to the cytoplasm. It catalyses the reaction AMP + diphosphate = 5-phospho-alpha-D-ribose 1-diphosphate + adenine. It participates in purine metabolism; AMP biosynthesis via salvage pathway; AMP from adenine: step 1/1. Catalyzes a salvage reaction resulting in the formation of AMP, that is energically less costly than de novo synthesis. The protein is Adenine phosphoribosyltransferase of Xanthomonas axonopodis pv. citri (strain 306).